The sequence spans 209 residues: Eukaryotic translation initiation factor 4E (209 aa).

Belongs to the eukaryotic initiation factor 4E family. As to quaternary structure, eIF4F is a multi-subunit complex, the composition of which varies with external and internal environmental conditions. It is composed of at least eIF4A, eIF4E and eIF4G. eIF4E is also known to interact with other partners.

Its function is as follows. Recognizes and binds the 7-methylguanosine-containing mRNA cap during an early step in the initiation of protein synthesis and facilitates ribosome binding by inducing the unwinding of the mRNAs secondary structures. In Candida glabrata (strain ATCC 2001 / BCRC 20586 / JCM 3761 / NBRC 0622 / NRRL Y-65 / CBS 138) (Yeast), this protein is Eukaryotic translation initiation factor 4E (TIF45).